Here is a 246-residue protein sequence, read N- to C-terminus: Ribonuclease PH (246 aa).

Residues Arg91 and 129 to 131 (GTR) each bind phosphate.

The protein belongs to the RNase PH family. As to quaternary structure, homohexameric ring arranged as a trimer of dimers.

The enzyme catalyses tRNA(n+1) + phosphate = tRNA(n) + a ribonucleoside 5'-diphosphate. Its function is as follows. Phosphorolytic 3'-5' exoribonuclease that plays an important role in tRNA 3'-end maturation. Removes nucleotide residues following the 3'-CCA terminus of tRNAs; can also add nucleotides to the ends of RNA molecules by using nucleoside diphosphates as substrates, but this may not be physiologically important. Probably plays a role in initiation of 16S rRNA degradation (leading to ribosome degradation) during starvation. The sequence is that of Ribonuclease PH from Burkholderia ambifaria (strain MC40-6).